Consider the following 373-residue polypeptide: CXADR-like membrane protein (373 aa).

An N-terminal signal peptide occupies residues 1–17; sequence MSLFFLWLVSYYVGTLG. Ig-like C2-type domains follow at residues 18 to 126 and 134 to 223; these read THTE…VILK and PKCE…VRVT. The Extracellular segment spans residues 18-234; the sequence is THTEIKRVAE…QYVQSIGMVA (217 aa). Cystine bridges form between Cys34-Cys110 and Cys152-Cys207. N-linked (GlcNAc...) asparagine glycosylation is found at Asn73 and Asn196. Residues 235-255 form a helical membrane-spanning segment; that stretch reads GAVTGIVAGALLIFLLIWLLI. The Cytoplasmic segment spans residues 256–373; that stretch reads RRKSKDRYEE…PSQSKAFQTV (118 aa). The span at 263–280 shows a compositional bias: basic and acidic residues; that stretch reads YEEEDRPNEIREDAEAPR. Residues 263 to 373 form a disordered region; it reads YEEEDRPNEI…PSQSKAFQTV (111 aa). Low complexity-rich tracts occupy residues 287-313, 321-332, and 353-363; these read SSSSSGSRSSRSGSSSTRSTGNSASRS, AAPQQPGLAPQA, and LTKAETTLSTT. Positions 364–373 are enriched in polar residues; sequence PSQSKAFQTV.

In terms of tissue distribution, predominantly expressed in epithelial cells within different tissues and in the white adipose tissue. Expressed at high levels in the heart and brain, at intermediate levels in the lung, skeletal muscle, kidney and testis and at low levels in the liver and spleen.

It is found in the cell junction. The protein resides in the tight junction. The protein localises to the cell membrane. Its function is as follows. May be involved in the cell-cell adhesion. May play a role in adipocyte differentiation and development of obesity. Is required for normal small intestine development. This chain is CXADR-like membrane protein (Clmp), found in Mus musculus (Mouse).